A 223-amino-acid chain; its full sequence is uncharacterized protein (223 aa).

A signal peptide spans 1 to 17; that stretch reads MLGQGLIFISLAFVAHA. Asn-58 carries an N-linked (GlcNAc...) asparagine glycan. Residues 149–188 form a disordered region; it reads VRKKGSRPSKPQKEKQGNKQGSKTEESPNVDEDELESEPE. The span at 159 to 174 shows a compositional bias: basic and acidic residues; the sequence is PQKEKQGNKQGSKTEE. Acidic residues predominate over residues 176–187; that stretch reads PNVDEDELESEP. Residues 191 to 211 traverse the membrane as a helical segment; the sequence is TFFQKYGLYLIPILFLIIMSG.

The protein localises to the endoplasmic reticulum membrane. This is an uncharacterized protein from Schizosaccharomyces pombe (strain 972 / ATCC 24843) (Fission yeast).